The chain runs to 202 residues: Regulator of G-protein signaling 16 (202 aa).

S-palmitoyl cysteine attachment occurs at residues Cys-2 and Cys-12. In terms of domain architecture, RGS spans 65–181; the sequence is SFDLLLSSKN…LKSPAYRDLA (117 aa). At Tyr-168 the chain carries Phosphotyrosine; by EGFR. Tyr-177 carries the phosphotyrosine modification.

As to quaternary structure, interacts with GNAI1 and GNAQ. Interacts with GNAI2, GNAI3 and GNAO1. In terms of processing, palmitoylated on Cys-2 and/or Cys-12. Phosphorylated. Phosphorylation at Tyr-168 by EGFR enhances GTPase accelerating (GAP) activity toward GNAI1. In terms of tissue distribution, abundantly expressed in retina with lower levels of expression in most other tissues.

It is found in the membrane. In terms of biological role, regulates G protein-coupled receptor signaling cascades. Inhibits signal transduction by increasing the GTPase activity of G protein alpha subunits, thereby driving them into their inactive GDP-bound form. Plays an important role in the phototransduction cascade by regulating the lifetime and effective concentration of activated transducin alpha. May regulate extra and intracellular mitogenic signals. In Homo sapiens (Human), this protein is Regulator of G-protein signaling 16 (RGS16).